The primary structure comprises 101 residues: Pro-corazonin (101 aa).

An N-terminal signal peptide occupies residues methionine 1–alanine 19. Glutamine 20 bears the Pyrrolidone carboxylic acid mark. Asparagine 30 carries the post-translational modification Asparagine amide.

This sequence belongs to the corazonin family.

It is found in the secreted. Cardioactive peptide. Corazonin is probably involved in the physiological regulation of the heart beat. This is Pro-corazonin (crz) from Bombyx mori (Silk moth).